The sequence spans 378 residues: Aminomethyltransferase (378 aa).

It belongs to the GcvT family. In terms of assembly, the glycine cleavage system is composed of four proteins: P, T, L and H.

It catalyses the reaction N(6)-[(R)-S(8)-aminomethyldihydrolipoyl]-L-lysyl-[protein] + (6S)-5,6,7,8-tetrahydrofolate = N(6)-[(R)-dihydrolipoyl]-L-lysyl-[protein] + (6R)-5,10-methylene-5,6,7,8-tetrahydrofolate + NH4(+). In terms of biological role, the glycine cleavage system catalyzes the degradation of glycine. The protein is Aminomethyltransferase of Acidobacterium capsulatum (strain ATCC 51196 / DSM 11244 / BCRC 80197 / JCM 7670 / NBRC 15755 / NCIMB 13165 / 161).